The chain runs to 320 residues: Short-chain dehydrogenase/reductase ARMGADRAFT_1169971 (320 aa).

Residues 19–39 (KVAVVTGANSGIGLYILFHVA) form a helical membrane-spanning segment. 4 residues coordinate NADP(+): Ile30, Asp78, Asn105, and Lys136. Asn157 carries N-linked (GlcNAc...) asparagine glycosylation. Catalysis depends on Ser159, which acts as the Proton donor. The NADP(+) site is built by Tyr192, Lys196, Val227, and Ser229. Tyr192 serves as the catalytic Proton acceptor. Lys196 (lowers pKa of active site Tyr) is an active-site residue. Residues 235–255 (LFTSLMFGTIINWVFSLFFIS) form a helical membrane-spanning segment.

It belongs to the short-chain dehydrogenases/reductases (SDR) family.

Its subcellular location is the membrane. It functions in the pathway secondary metabolite biosynthesis. Short-chain dehydrogenase/reductase, part of the gene cluster that mediates the biosynthesis of melleolides, a range of antifungal and phytotoxic polyketide derivatives composed of an orsellinic acid (OA) moiety esterified to various sesquiterpene alcohols. The first step in melleolides biosynthesis is performed by the delta(6)-protoilludene synthase PRO1 which catalyzes the cyclization of farnesyl diphosphate to protoilludene. The orsellinic acid synthase armB produces OA by condensing acetyl-CoA with 3 malonyl-CoA units in a three-round chain elongation reaction folowed by a C2-C7 ring closure. ArmB further catalyzes the trans-esterification of OA to the various sesquiterpene alcohols resulting from the hydroxylation of protoilludene. The melleolides cluster also includes 5 cytochrome P450 monooxygenases, 4 NAD(+)-dependent oxidoreductases, one flavin-dependent oxidoreductase, and one O-methyltransferase. The cytochrome P450 monooxygenases may be involved in protoilludene hydroxylation to elaborate melleolides with multiple alcohol groups, such as melleolide D, which carries alcohol functionalities at C-4, C-5, C-10, and C-13. The role of the NAD(+)-dependent enzymes remains unknown. Numerous melleolides, including arnamial, show 5'-O-methylation of the aromatic moiety which may be catalyzed by the methyltransferase encoded in the cluster. The flavin-dependent oxidoreductase might represent the dehydrogenase yielding the aldehyde in position 1 of arnamial and other melleolides. Finally, several halogenase localized outside of the cluster, are able to catalyze the transfer of a single chlorine atom to the melleolide backbone, resulting in a 6'-chloromelleolide product. This is Short-chain dehydrogenase/reductase ARMGADRAFT_1169971 from Armillaria gallica (Bulbous honey fungus).